The sequence spans 499 residues: MDVDILLSLVLAFFGWAAIYFLTSRLSFGKRARLPPGPYPFPVIGNIFQLGQNPNQSLTKLAKTYGPLMSLKLGSNTTVVVSSPAVAREVLQKNDQVFSSRIIPHAAEAHAHHKYSMVWLQVSGLWRNLRKISKEHMFAAQRLDASEGLRQEKLQELHDYLVRCSTSNKAVNFGQTAFTTSLNFISSTFFSVDFAAYGSDSSQEFKDIVWRILKSYSTPNVADYFPVLKFMDPQGILQKNTFLFSKMFDIFDNIINERLMMRGSLDTSKKNDLLEALLNHSANNESEFSLNELKHMLLDLFLGGTETTSTTLEWAMAELLRNPEKLERVRAELHQVIGEKEIIHESDISRLPYLQAIVKETFRLHPIVPLLIPHKAEADVEINGYTVPKNSQILINVWASGRDSGTWLDPETFSPERFLHSEIDMKGRHFELIPFGAGRRICPGLPLAYRTLHTMLATCIHNFDWKLKDGMKPEDIDMEEKYGLTLQLAVPLNVIPVKL.

The chain crosses the membrane as a helical span at residues 3–23; it reads VDILLSLVLAFFGWAAIYFLT. N-linked (GlcNAc...) asparagine glycans are attached at residues asparagine 55, asparagine 76, asparagine 279, and asparagine 284. A heme-binding site is contributed by cysteine 442.

This sequence belongs to the cytochrome P450 family.

The protein resides in the membrane. In Catharanthus roseus (Madagascar periwinkle), this protein is Cytochrome P450 76T24.